A 558-amino-acid chain; its full sequence is 2-isopropylmalate synthase (558 aa).

The region spanning 30–303 (PIWCSVDLRD…DPKLDCSDIE (274 aa)) is the Pyruvate carboxyltransferase domain. 4 residues coordinate Mg(2+): D39, H242, H244, and N278. A regulatory domain region spans residues 437 to 558 (QPGARIKFVD…ANRVLDVVGK (122 aa)).

This sequence belongs to the alpha-IPM synthase/homocitrate synthase family. LeuA type 2 subfamily. In terms of assembly, homodimer. Mg(2+) serves as cofactor.

The protein resides in the cytoplasm. It carries out the reaction 3-methyl-2-oxobutanoate + acetyl-CoA + H2O = (2S)-2-isopropylmalate + CoA + H(+). The protein operates within amino-acid biosynthesis; L-leucine biosynthesis; L-leucine from 3-methyl-2-oxobutanoate: step 1/4. Its function is as follows. Catalyzes the condensation of the acetyl group of acetyl-CoA with 3-methyl-2-oxobutanoate (2-ketoisovalerate) to form 3-carboxy-3-hydroxy-4-methylpentanoate (2-isopropylmalate). This Rhizobium meliloti (strain 1021) (Ensifer meliloti) protein is 2-isopropylmalate synthase.